The primary structure comprises 154 residues: MKLLSKIMIIALAASMLQACNGPGGMNKQGTGTLLGGAGGALLGSQFGKGKGQLVGVGVGALLGAVLGGQIGAGMDEQDRRLAELTSQRALETAPSGSNVEWRNPDNGNYGYITPNKTYRNSTGQYCREYTQTVVIGGKQQKAYGNACLQPDGQ.

The signal sequence occupies residues 1–19; that stretch reads MKLLSKIMIIALAASMLQA. The N-palmitoyl cysteine moiety is linked to residue Cys20. Cys20 is lipidated: S-diacylglycerol cysteine.

The protein belongs to the rickettsiale 17 kDa surface antigen family.

It localises to the cell outer membrane. The chain is 17 kDa surface antigen (omp) from Rickettsia rhipicephali.